The primary structure comprises 185 residues: Ribosome-recycling factor (185 aa).

It belongs to the RRF family.

It is found in the cytoplasm. In terms of biological role, responsible for the release of ribosomes from messenger RNA at the termination of protein biosynthesis. May increase the efficiency of translation by recycling ribosomes from one round of translation to another. In Laribacter hongkongensis (strain HLHK9), this protein is Ribosome-recycling factor.